We begin with the raw amino-acid sequence, 322 residues long: Ribosomal RNA large subunit methyltransferase F (322 aa).

The protein belongs to the methyltransferase superfamily. METTL16/RlmF family.

Its subcellular location is the cytoplasm. The enzyme catalyses adenosine(1618) in 23S rRNA + S-adenosyl-L-methionine = N(6)-methyladenosine(1618) in 23S rRNA + S-adenosyl-L-homocysteine + H(+). Specifically methylates the adenine in position 1618 of 23S rRNA. In Cytophaga hutchinsonii (strain ATCC 33406 / DSM 1761 / CIP 103989 / NBRC 15051 / NCIMB 9469 / D465), this protein is Ribosomal RNA large subunit methyltransferase F.